A 362-amino-acid polypeptide reads, in one-letter code: Protein RecA (362 aa).

77–84 is a binding site for ATP; it reads GPESSGKT.

Belongs to the RecA family.

It localises to the cytoplasm. In terms of biological role, can catalyze the hydrolysis of ATP in the presence of single-stranded DNA, the ATP-dependent uptake of single-stranded DNA by duplex DNA, and the ATP-dependent hybridization of homologous single-stranded DNAs. It interacts with LexA causing its activation and leading to its autocatalytic cleavage. This Rhizobium etli (strain CIAT 652) protein is Protein RecA.